A 91-amino-acid chain; its full sequence is Large ribosomal subunit protein bL27 (91 aa).

Over residues Met-1–Gly-13 the composition is skewed to polar residues. The interval Met-1–Arg-20 is disordered.

Belongs to the bacterial ribosomal protein bL27 family.

In Anaplasma phagocytophilum (strain HZ), this protein is Large ribosomal subunit protein bL27.